The sequence spans 206 residues: MTDQPRRRLVLASQSPARLNLLRQAGLDPEVIVSGFDEDRLSAPTPAELALALAEAKASVVAAKPEVQGALVIGCDSVLDLDGEALGKPADAEEATARWKAMRGRAGTLQTGHCIYDTASKRYASATASTVVRFGEPTDEEIAAYVASGEPLHVAGAFTLDGRSAPFIEGIDGDHGNVIGISLPTVRRLLGELGVGITQLWTPREK.

The active-site Proton acceptor is the aspartate 76.

This sequence belongs to the Maf family. A divalent metal cation serves as cofactor.

It is found in the cytoplasm. The catalysed reaction is a ribonucleoside 5'-triphosphate + H2O = a ribonucleoside 5'-phosphate + diphosphate + H(+). It catalyses the reaction a 2'-deoxyribonucleoside 5'-triphosphate + H2O = a 2'-deoxyribonucleoside 5'-phosphate + diphosphate + H(+). Its function is as follows. Nucleoside triphosphate pyrophosphatase. May have a dual role in cell division arrest and in preventing the incorporation of modified nucleotides into cellular nucleic acids. This is Nucleoside triphosphate pyrophosphatase from Streptomyces avermitilis (strain ATCC 31267 / DSM 46492 / JCM 5070 / NBRC 14893 / NCIMB 12804 / NRRL 8165 / MA-4680).